Consider the following 185-residue polypeptide: MKIGVLALQGAVREHIRHIELSGYEGIAIKRVEQLDEIDGLILPGGESTTLRRLMDLYGFKEKLQQLDLPMFGTCAGLIVLAKNVENESGYLNKLDITVERNSFGRQVDSFESELDIKGIANDIEGVFIRAPHIAKVDNGVEILSKVGGKIVAVKQGQYLGVSFHPELTDDYRITKYFIEHMIKH.

L-glutamine is bound at residue 46–48 (GES). Catalysis depends on Cys-75, which acts as the Nucleophile. L-glutamine is bound by residues Arg-101 and 129-130 (IR). Residues His-165 and Glu-167 each act as charge relay system in the active site.

Belongs to the glutaminase PdxT/SNO family. In the presence of PdxS, forms a dodecamer of heterodimers. Only shows activity in the heterodimer.

It carries out the reaction aldehydo-D-ribose 5-phosphate + D-glyceraldehyde 3-phosphate + L-glutamine = pyridoxal 5'-phosphate + L-glutamate + phosphate + 3 H2O + H(+). The catalysed reaction is L-glutamine + H2O = L-glutamate + NH4(+). It functions in the pathway cofactor biosynthesis; pyridoxal 5'-phosphate biosynthesis. Catalyzes the hydrolysis of glutamine to glutamate and ammonia as part of the biosynthesis of pyridoxal 5'-phosphate. The resulting ammonia molecule is channeled to the active site of PdxS. The chain is Pyridoxal 5'-phosphate synthase subunit PdxT from Staphylococcus epidermidis (strain ATCC 12228 / FDA PCI 1200).